We begin with the raw amino-acid sequence, 154 residues long: MDIVTEHLKRGRYYAPGKHAGPTCFSKNISKNNAFRAKIKDLNRKIESVFFGCAHNQPLIALVYYKQREQIVRESKLQGKNTRIELSFLLRNLTSEDPNSTYTKEKIYELITDYHDGRQELLFFFWNHLVDTVNFTEILVDRKSGKEVSAISAN.

The protein localises to the mitochondrion. This is an uncharacterized protein from Marchantia polymorpha (Common liverwort).